The following is a 314-amino-acid chain: Homoserine kinase (314 aa).

95 to 105 provides a ligand contact to ATP; sequence PHSRGLGSSAS.

The protein belongs to the GHMP kinase family. Homoserine kinase subfamily.

It localises to the cytoplasm. It catalyses the reaction L-homoserine + ATP = O-phospho-L-homoserine + ADP + H(+). Its pathway is amino-acid biosynthesis; L-threonine biosynthesis; L-threonine from L-aspartate: step 4/5. Its function is as follows. Catalyzes the ATP-dependent phosphorylation of L-homoserine to L-homoserine phosphate. This is Homoserine kinase from Rhodococcus erythropolis (strain PR4 / NBRC 100887).